The primary structure comprises 370 residues: MFRQSVRRFATAALRSAAESPYNVRVSQAQGFVNGLTEAIGNTPLIRLKRLSEETGSNILAKAEFQNPGGSVKDRAALYVVKDAEERGLLKPGGTVVEGTAGNTGIGLAHVCRSKGYKLVIYMPNTQSQGKIDLLRLLGAEVYPVPAVAFDNPENYNHKARRHAESLDNAVWTNQFDNTANRRAHIETTGPEIWAQTGGKLDAFTCSTGTGGTLAGITYYLKQASGGRVKSFLADPPGSVLHSYIQSGGKLVERSGSSITEGIGQGRITDNLQPDVGTLDGSLNISDEKTIEMIYRCLDEEGLYLGASSALNVVAAKEVAEKLGKGSTVVTILADGAYRYADRLFSKSWLESKGLRNAIPKHLEKYIVLP.

Residues 1 to 16 (MFRQSVRRFATAALRS) constitute a mitochondrion transit peptide. Lysine 73 carries the post-translational modification N6-(pyridoxal phosphate)lysine. Pyridoxal 5'-phosphate is bound by residues asparagine 103, 209 to 213 (GTGGT), and serine 308.

This sequence belongs to the cysteine synthase/cystathionine beta-synthase family. Requires pyridoxal 5'-phosphate as cofactor.

The protein resides in the mitochondrion. It carries out the reaction O-succinyl-L-serine + hydrogen sulfide = L-cysteine + succinate. The enzyme catalyses O-acetyl-L-serine + hydrogen sulfide = L-cysteine + acetate. It participates in amino-acid biosynthesis; L-cysteine biosynthesis; L-cysteine from L-serine: step 2/2. Catalyzes the conversion of O-succinyl-L-serine into cysteine, the last step in the cysteine biosynthesis pathway. Can also use O-acetyl-L-serine. This chain is Cysteine synthase 1, found in Emericella nidulans (strain FGSC A4 / ATCC 38163 / CBS 112.46 / NRRL 194 / M139) (Aspergillus nidulans).